Reading from the N-terminus, the 319-residue chain is F-box only protein 8 (319 aa).

Positions 68-111 (FINLEMLPPELSFTILSYLNATDLCLASCVWQDLANDELLWQGL) constitute an F-box domain. Residues 146–276 (FNANPEEGVS…LILLSIDLTS (131 aa)) enclose the SEC7 domain.

High expression in brain, heart, kidney, liver, lung, skeletal muscle, testis, and day-7 embryos.

Functionally, may promote guanine-nucleotide exchange on an ARF. Promotes the activation of ARF through replacement of GDP with GTP (Potential). This chain is F-box only protein 8 (Fbxo8), found in Mus musculus (Mouse).